Here is a 944-residue protein sequence, read N- to C-terminus: Tyrosine-protein kinase transmembrane receptor ROR2 (944 aa).

The N-terminal stretch at 1-33 (MARGWVRPSRVPLCARAVWTAAALLLWTPWTAG) is a signal peptide. Residues 34–403 (EVEDSEAIDT…CSPRDGSKMG (370 aa)) are Extracellular-facing. Residues 55 to 145 (PTLKGYFLNF…VATNGLKTIT (91 aa)) form the Ig-like C2-type domain. N-linked (GlcNAc...) asparagine glycosylation occurs at N70. Intrachain disulfides connect C83/C135, C174/C239, C182/C232, C223/C264, C252/C300, C256/C286, C316/C394, C337/C377, and C365/C389. Residues 169–303 (QEDGFCQPYR…SPDAANCMRI (135 aa)) form the FZ domain. N188 carries N-linked (GlcNAc...) asparagine glycosylation. One can recognise a Kringle domain in the interval 316–394 (CYNGSGADYR…RVELCDVPPC (79 aa)). N318 is a glycosylation site (N-linked (GlcNAc...) asparagine). A helical transmembrane segment spans residues 404–424 (ILYILVPSIAIPLVIACLFFL). Residues 425 to 944 (VCMCRNKQKA…TEAAHVQLEA (520 aa)) lie on the Cytoplasmic side of the membrane. Residues 473 to 746 (VRFMEELGED…PRFKDIHSRL (274 aa)) form the Protein kinase domain. Residues 479-487 (LGEDRFGKV) and K507 each bind ATP. The active-site Proton acceptor is the D615. Y646 carries the post-translational modification Phosphotyrosine; by autocatalysis. The segment at 757-779 (SSAQTSGASNTTQTSSLSTSPVS) is disordered. A compositionally biased stretch (low complexity) spans 765 to 779 (SNTTQTSSLSTSPVS). Position 785 is an asymmetric dimethylarginine (R785). Disordered regions lie at residues 850 to 879 (QVPP…TAPS) and 898 to 929 (QNIA…LGDN). The segment covering 857 to 872 (PKPSSHHSGSGSTSTG) has biased composition (low complexity).

This sequence belongs to the protein kinase superfamily. Tyr protein kinase family. ROR subfamily. Homodimer; promotes osteogenesis. Binds YWHAB. Interacts with WTIP. Interacts with ROR2. Mg(2+) is required as a cofactor.

The protein localises to the cell membrane. The enzyme catalyses L-tyrosyl-[protein] + ATP = O-phospho-L-tyrosyl-[protein] + ADP + H(+). In terms of biological role, tyrosine-protein kinase receptor which may be involved in the early formation of the chondrocytes. It seems to be required for cartilage and growth plate development. Phosphorylates YWHAB, leading to induction of osteogenesis and bone formation. In contrast, has also been shown to have very little tyrosine kinase activity in vitro. May act as a receptor for wnt ligand WNT5A which may result in the inhibition of WNT3A-mediated signaling. This Mus musculus (Mouse) protein is Tyrosine-protein kinase transmembrane receptor ROR2 (Ror2).